Consider the following 1009-residue polypeptide: Protein-tyrosine kinase 2-beta (1009 aa).

The FERM domain occupies 39–359 (RILKVCFYSN…GYCRLQGEHK (321 aa)). Phosphoserine occurs at positions 361, 375, and 399. Position 402 is a phosphotyrosine; by autocatalysis (Tyr-402). Residues 425–683 (VVLNRILGEG…ELVCSLSDIY (259 aa)) enclose the Protein kinase domain. Residues 431–439 (LGEGFFGEV), Lys-457, and 503–509 (ELYPYGE) contribute to the ATP site. Residue Asp-549 is the Proton acceptor of the active site. The residue at position 579 (Tyr-579) is a Phosphotyrosine. Tyr-580 carries the post-translational modification Phosphotyrosine; by SRC, FYN and LCK. The tract at residues 696-728 (NARYRPPKILEPTTFQEPPPKPSRPKYRPPPQT) is disordered. Positions 712–727 (EPPPKPSRPKYRPPPQ) are enriched in pro residues. Tyr-722 carries the post-translational modification Phosphotyrosine. The residue at position 762 (Ser-762) is a Phosphoserine. Thr-765 bears the Phosphothreonine mark. The segment at 801–1009 (KIKMKQVLER…VANLAHPPAE (209 aa)) is interaction with TGFB1I1. Residue Tyr-834 is modified to Phosphotyrosine. At Ser-839 the chain carries Phosphoserine. Thr-842 carries the phosphothreonine modification. Position 849 is a phosphotyrosine (Tyr-849). The residue at position 866 (Ser-866) is a Phosphoserine. Positions 868-1009 (QPTANLDRTD…VANLAHPPAE (142 aa)) are focal adhesion targeting (FAT). Tyr-881 carries the post-translational modification Phosphotyrosine.

Belongs to the protein kinase superfamily. Tyr protein kinase family. FAK subfamily. As to quaternary structure, homodimer, or homooligomer. Interacts with KCNA2. Interacts with NPHP1, ASAP1, ASAP2, ARHGAP26, SKAP2 and TGFB1I1. The Tyr-402 phosphorylated form interacts with SRC (via SH2 domain) and SRC family members. Forms a signaling complex with EPHA1, LCK and phosphatidylinositol 3-kinase; upon activation by EFNA1. Interacts with GRB2 (via SH2 domain). Interacts with P53/TP53 and MDM2. Interacts with MYLK. Interacts with BCAR1. Interacts with RB1CC1. Interacts with RHOU. Interacts with VAV1. Interacts with PDPK1. Interacts with DLG4. Interacts with LPXN and PTPN12. Interacts with SIRPA and SH2D3C. Interacts (hypophosphorylated) with PXN. Interacts with ARHGAP10. In terms of processing, phosphorylated on tyrosine residues in response to various stimuli that elevate the intracellular calcium concentration; this activation is indirect and may be mediated by production of reactive oxygen species (ROS). Tyr-402 is the major autophosphorylation site, but other kinases can also phosphorylate Tyr-402. Autophosphorylation occurs in trans, i.e. one subunit of the dimeric receptor phosphorylates tyrosine residues on the other subunit. Phosphorylation at Tyr-402 promotes interaction with SRC and SRC family members, leading to phosphorylation at Tyr-579; Tyr-580 and Tyr-881. Phosphorylation at Tyr-881 is important for interaction with GRB2. Phosphorylated on tyrosine residues upon activation of FGR and PKC. Recruitment by NPHP1 to cell matrix adhesions initiates Tyr-402 phosphorylation. In monocytes, adherence to substrata is required for tyrosine phosphorylation and kinase activation. Angiotensin II, thapsigargin and L-alpha-lysophosphatidic acid (LPA) also induce autophosphorylation and increase kinase activity. Phosphorylation by MYLK promotes ITGB2 activation and is thus essential to trigger neutrophil transmigration during lung injury. Dephosphorylated by PTPN12.

It localises to the cytoplasm. Its subcellular location is the perinuclear region. The protein localises to the cell membrane. The protein resides in the cell junction. It is found in the focal adhesion. It localises to the cell projection. Its subcellular location is the lamellipodium. The protein localises to the cell cortex. The protein resides in the nucleus. It catalyses the reaction L-tyrosyl-[protein] + ATP = O-phospho-L-tyrosyl-[protein] + ADP + H(+). Its activity is regulated as follows. Activated in response to stimuli that lead to increased intracellular Ca(2+) levels; this activation is indirect and may be mediated by calcium-mediated production of reactive oxygen species (ROS). Activated by autophosphorylation at Tyr-402; this creates a binding site for SRC family kinases and leads to phosphorylation at additional tyrosine residues. Phosphorylation at Tyr-402, Tyr-579 and Tyr-580 is required for optimal kinase activity. Non-receptor protein-tyrosine kinase that regulates reorganization of the actin cytoskeleton, cell polarization, cell migration, adhesion, spreading and bone remodeling. Plays a role in the regulation of the humoral immune response, and is required for normal levels of marginal B-cells in the spleen and normal migration of splenic B-cells. Required for normal macrophage polarization and migration towards sites of inflammation. Regulates cytoskeleton rearrangement and cell spreading in T-cells, and contributes to the regulation of T-cell responses. Promotes osteoclastic bone resorption; this requires both PTK2B/PYK2 and SRC. May inhibit differentiation and activity of osteoprogenitor cells. Functions in signaling downstream of integrin and collagen receptors, immune receptors, G-protein coupled receptors (GPCR), cytokine, chemokine and growth factor receptors, and mediates responses to cellular stress. Forms multisubunit signaling complexes with SRC and SRC family members upon activation; this leads to the phosphorylation of additional tyrosine residues, creating binding sites for scaffold proteins, effectors and substrates. Regulates numerous signaling pathways. Promotes activation of phosphatidylinositol 3-kinase and of the AKT1 signaling cascade. Promotes activation of NOS3. Regulates production of the cellular messenger cGMP. Promotes activation of the MAP kinase signaling cascade, including activation of MAPK1/ERK2, MAPK3/ERK1 and MAPK8/JNK1. Promotes activation of Rho family GTPases, such as RHOA and RAC1. Recruits the ubiquitin ligase MDM2 to P53/TP53 in the nucleus, and thereby regulates P53/TP53 activity, P53/TP53 ubiquitination and proteasomal degradation. Acts as a scaffold, binding to both PDPK1 and SRC, thereby allowing SRC to phosphorylate PDPK1 at 'Tyr-9, 'Tyr-373', and 'Tyr-376'. Promotes phosphorylation of NMDA receptors by SRC family members, and thereby contributes to the regulation of NMDA receptor ion channel activity and intracellular Ca(2+) levels. May also regulate potassium ion transport by phosphorylation of potassium channel subunits. Phosphorylates SRC; this increases SRC kinase activity. Phosphorylates ASAP1, NPHP1, KCNA2 and SHC1. Promotes phosphorylation of ASAP2, RHOU and PXN; this requires both SRC and PTK2/PYK2. In Mus musculus (Mouse), this protein is Protein-tyrosine kinase 2-beta (Ptk2b).